Here is a 990-residue protein sequence, read N- to C-terminus: Putative ariadne-like RING finger protein R811 (990 aa).

The VWFA domain maps to 8 to 201 (DLAIVVDATG…IITQTTIKLL (194 aa)). The segment at 797 to 990 (EKGLCMICFN…GGAFEYDQDD (194 aa)) is TRIAD supradomain. Zn(2+)-binding residues include Cys801, Cys804, Cys827, and Cys830. The RING-type 1 zinc-finger motif lies at 801 to 854 (CMICFNEFSKSNLRQICGRKVCQSVACYDCMKSWYGENKVGDLIHVNALTCPFC). The segment at 855–903 (KQCPMFNILAAFNRQVCAMVRTNNSFDIDWWYGWCLKCFQPKKVVEKEC) adopts an IBR-type zinc-finger fold. Positions 930 and 935 each coordinate Zn(2+). Residues 930–961 (CPNSLCKIPIIKDGGCNHMECTACKKHFCWLC) form an RING-type 2; atypical zinc finger. Cys945 is a catalytic residue. Zn(2+) is bound by residues Cys950 and Cys953.

This is Putative ariadne-like RING finger protein R811 from Acanthamoeba polyphaga (Amoeba).